Reading from the N-terminus, the 70-residue chain is U-scoloptoxin(20)-Sm1a (70 aa).

A signal peptide spans 1 to 24 (MKKRSQVFCIFIAMVLLILPLSMS).

It belongs to the scoloptoxin-20 family. In terms of processing, contains 3 disulfide bonds. In terms of tissue distribution, expressed by the venom gland.

It is found in the secreted. The protein is U-scoloptoxin(20)-Sm1a of Scolopendra morsitans (Tanzanian blue ringleg centipede).